The chain runs to 91 residues: DNA-directed RNA polymerase subunit omega (91 aa).

This sequence belongs to the RNA polymerase subunit omega family. As to quaternary structure, the RNAP catalytic core consists of 2 alpha, 1 beta, 1 beta' and 1 omega subunit. When a sigma factor is associated with the core the holoenzyme is formed, which can initiate transcription.

It catalyses the reaction RNA(n) + a ribonucleoside 5'-triphosphate = RNA(n+1) + diphosphate. In terms of biological role, promotes RNA polymerase assembly. Latches the N- and C-terminal regions of the beta' subunit thereby facilitating its interaction with the beta and alpha subunits. In Yersinia pestis bv. Antiqua (strain Antiqua), this protein is DNA-directed RNA polymerase subunit omega.